A 202-amino-acid chain; its full sequence is Peptidyl-tRNA hydrolase (202 aa).

Tyrosine 19 is a tRNA binding site. Histidine 24 (proton acceptor) is an active-site residue. Residues tyrosine 70, asparagine 72, and asparagine 118 each contribute to the tRNA site.

This sequence belongs to the PTH family. In terms of assembly, monomer.

It localises to the cytoplasm. It carries out the reaction an N-acyl-L-alpha-aminoacyl-tRNA + H2O = an N-acyl-L-amino acid + a tRNA + H(+). Functionally, hydrolyzes ribosome-free peptidyl-tRNAs (with 1 or more amino acids incorporated), which drop off the ribosome during protein synthesis, or as a result of ribosome stalling. Catalyzes the release of premature peptidyl moieties from peptidyl-tRNA molecules trapped in stalled 50S ribosomal subunits, and thus maintains levels of free tRNAs and 50S ribosomes. The polypeptide is Peptidyl-tRNA hydrolase (Prochlorococcus marinus (strain NATL1A)).